Reading from the N-terminus, the 928-residue chain is Retinoblastoma-associated protein (928 aa).

The interval 1–42 (MPPKTPRKTAATAAAAAAEPPAPPPPPPPEEDPEQDSGPEDL) is disordered. Position 2 is a n,N-dimethylproline (Pro-2). The segment covering 8 to 19 (KTAATAAAAAAE) has biased composition (low complexity). Acidic residues predominate over residues 29–39 (PEEDPEQDSGP). Ser-37 carries the post-translational modification Phosphoserine. Phosphoserine; by CDK1 is present on Ser-249. Thr-252 carries the post-translational modification Phosphothreonine; by CDK1. Thr-356 carries the phosphothreonine modification. Thr-373 bears the Phosphothreonine; by CDK1 mark. The tract at residues 373 to 579 (TPVRTVMNTI…FDLIKQSKDR (207 aa)) is domain A. The pocket; binds T and E1A stretch occupies residues 373 to 771 (TPVRTVMNTI…QRLKTNILQY (399 aa)). The residue at position 567 (Ser-567) is a Phosphoserine; by CDK2. Residues 580 to 639 (EGPTDHLESACPLNLPLQNNHTAADMYLSPVRSPKKKGSTTRVNSTANAETQATSAFQTQ) are spacer. Position 608 is a phosphoserine (Ser-608). Residues 610 to 632 (VRSPKKKGSTTRVNSTANAETQA) form a disordered region. The residue at position 612 (Ser-612) is a Phosphoserine; by CHEK2 and CHEK1. Over residues 619 to 632 (TTRVNSTANAETQA) the composition is skewed to polar residues. A Phosphoserine modification is found at Ser-624. The domain B stretch occupies residues 640 to 771 (KPLKSTSLSL…QRLKTNILQY (132 aa)). The interaction with LIMD1 stretch occupies residues 763 to 928 (RLKTNILQYA…SMDTSNKEEK (166 aa)). Positions 771 to 928 (YASTRPPTLS…SMDTSNKEEK (158 aa)) are domain C; mediates interaction with E4F1. A phosphoserine mark is found at Ser-780, Ser-788, and Ser-795. Ser-807 bears the Phosphoserine; by CDK1 and CDK3 mark. N6-methyllysine; by SMYD2 is present on Lys-810. Ser-811 carries the post-translational modification Phosphoserine; by CDK1 and CDK3. Thr-821 bears the Phosphothreonine; by CDK6 mark. At Thr-823 the chain carries Phosphothreonine. The residue at position 826 (Thr-826) is a Phosphothreonine; by CDK4. Thr-841 is subject to Phosphothreonine. Position 855 is a phosphoserine (Ser-855). N6-methyllysine; by SMYD2 is present on Lys-860. The short motif at 860-876 (KRSAEGSNPPKPLKKLR) is the Bipartite nuclear localization signal element. The segment at 860 to 928 (KRSAEGSNPP…SMDTSNKEEK (69 aa)) is disordered. N6-acetyllysine; by PCAF occurs at positions 873 and 874. Positions 915 to 928 (KMNDSMDTSNKEEK) are enriched in basic and acidic residues.

This sequence belongs to the retinoblastoma protein (RB) family. As to quaternary structure, the hypophosphorylated form interacts with and sequesters the E2F1 transcription factor, thereby inhibiting E2F1 transcription. Interacts with heterodimeric E2F/DP transcription factor complexes containing TFDP1 and either E2F1, E2F3, E2F4 or E2F5, or TFDP2 and E2F4. Interacts (when hyperphosphorylated and hypophosphorylated) with PKP3; the interaction inhibits RB1 interaction with and repression of the transcription factor E2F1, potentially via sequestering RB1 to the cytoplasm. The unphosphorylated form interacts with EID1, ARID3B, KDM5A, SUV39H1, MJD2A/JHDM3A and THOC1. Interacts with the N-terminal domain of TAF1. Interacts with SNW1, ATAD5, AATF, DNMT1, LIN9, LMNA, KMT5B, KMT5C, PELP1, UHRF2 and TMPO-alpha. Interacts with GRIP1 and UBR4. Interacts with ARID4A and KDM5B. Interacts with E4F1 and LIMD1. Interacts with SMARCA4/BRG1 and HDAC1. Interacts with PSMA3 and USP4. Interacts (when methylated at Lys-860) with L3MBTL1. Interacts with CHEK2; phosphorylates RB1. Interacts with CDK1 and CDK2. Interacts with PRMT2. Interacts with CEBPA. P-TEFB complex interacts with RB1; promotes phosphorylation of RB1. Interacts with RBBP9; the interaction disrupts RB1 binding to E2F1. Interacts with KAT2B/PCAF and EP300/P300. Interacts with PAX5. Interacts (phosphorylated and unphosphorylated) with BLCAP. May interact with NDC80. (Microbial infection) Interacts with adenovirus E1A protein. In terms of assembly, (Microbial infection) Interacts with HPV E7 protein. As to quaternary structure, (Microbial infection) Interacts with SV40 large T antigen. (Microbial infection) Interacts with human cytomegalovirus/HHV-5 proteins UL82 and UL123. In terms of assembly, (Microbial infection) Interacts with molluscum contagiosum virus protein MC007. In terms of processing, phosphorylated by CDK6 and CDK4, and subsequently by CDK2 at Ser-567 in G1, thereby releasing E2F1 which is then able to activate cell growth. Dephosphorylated at the late M phase. SV40 large T antigen, HPV E7 and adenovirus E1A bind to the underphosphorylated, active form of pRb. Phosphorylation at Thr-821 and Thr-826 promotes interaction between the C-terminal domain C and the Pocket domain, and thereby inhibits interactions with heterodimeric E2F/DP transcription factor complexes. Dephosphorylated at Ser-795 by calcineruin upon calcium stimulation. CDK3/cyclin-C-mediated phosphorylation at Ser-807 and Ser-811 is required for G0-G1 transition. Phosphorylated by CDK1 and CDK2 upon TGFB1-mediated apoptosis. N-terminus is methylated by METTL11A/NTM1. Monomethylation at Lys-810 by SMYD2 enhances phosphorylation at Ser-807 and Ser-811, and promotes cell cycle progression. Monomethylation at Lys-860 by SMYD2 promotes interaction with L3MBTL1. Post-translationally, acetylated during keratinocyte differentiation. Acetylation at Lys-873 and Lys-874 regulates subcellular localization. Can be deacetylated by SIRT1. As to expression, expressed in the retina. Expressed in foreskin keratinocytes (at protein level).

The protein localises to the nucleus. Its subcellular location is the cytoplasm. In terms of biological role, tumor suppressor that is a key regulator of the G1/S transition of the cell cycle. The hypophosphorylated form binds transcription regulators of the E2F family, preventing transcription of E2F-responsive genes. Both physically blocks E2Fs transactivating domain and recruits chromatin-modifying enzymes that actively repress transcription. Cyclin and CDK-dependent phosphorylation of RB1 induces its dissociation from E2Fs, thereby activating transcription of E2F responsive genes and triggering entry into S phase. RB1 also promotes the G0-G1 transition upon phosphorylation and activation by CDK3/cyclin-C. Directly involved in heterochromatin formation by maintaining overall chromatin structure and, in particular, that of constitutive heterochromatin by stabilizing histone methylation. Recruits and targets histone methyltransferases SUV39H1, KMT5B and KMT5C, leading to epigenetic transcriptional repression. Controls histone H4 'Lys-20' trimethylation. Inhibits the intrinsic kinase activity of TAF1. Mediates transcriptional repression by SMARCA4/BRG1 by recruiting a histone deacetylase (HDAC) complex to the c-FOS promoter. In resting neurons, transcription of the c-FOS promoter is inhibited by BRG1-dependent recruitment of a phospho-RB1-HDAC1 repressor complex. Upon calcium influx, RB1 is dephosphorylated by calcineurin, which leads to release of the repressor complex. Its function is as follows. (Microbial infection) In case of viral infections, interactions with SV40 large T antigen, HPV E7 protein or adenovirus E1A protein induce the disassembly of RB1-E2F1 complex thereby disrupting RB1's activity. This Homo sapiens (Human) protein is Retinoblastoma-associated protein (RB1).